Here is a 281-residue protein sequence, read N- to C-terminus: Pantothenate synthetase (281 aa).

Residue 30 to 37 (MGALHRGH) coordinates ATP. Histidine 37 (proton donor) is an active-site residue. Glutamine 61 provides a ligand contact to (R)-pantoate. Glutamine 61 provides a ligand contact to beta-alanine. 147–150 (GEKD) is a binding site for ATP. Glutamine 153 lines the (R)-pantoate pocket. ATP-binding positions include isoleucine 176 and 184–187 (LSSR).

This sequence belongs to the pantothenate synthetase family. Homodimer.

It is found in the cytoplasm. It carries out the reaction (R)-pantoate + beta-alanine + ATP = (R)-pantothenate + AMP + diphosphate + H(+). It functions in the pathway cofactor biosynthesis; (R)-pantothenate biosynthesis; (R)-pantothenate from (R)-pantoate and beta-alanine: step 1/1. Catalyzes the condensation of pantoate with beta-alanine in an ATP-dependent reaction via a pantoyl-adenylate intermediate. The polypeptide is Pantothenate synthetase (Porphyromonas gingivalis (strain ATCC BAA-308 / W83)).